The chain runs to 215 residues: Pyridoxine/pyridoxamine 5'-phosphate oxidase (215 aa).

Substrate contacts are provided by residues Arg11–Tyr14 and Lys69. FMN-binding positions include Arg64–Lys69, Tyr79–Thr80, Lys86, and Gln108. Residues Tyr126, Arg130, and Ser134 each coordinate substrate. Residues Gln143–Ser144 and Trp188 contribute to the FMN site. A substrate-binding site is contributed by Arg194–His196. Arg198 is a binding site for FMN.

Belongs to the pyridoxamine 5'-phosphate oxidase family. As to quaternary structure, homodimer. FMN is required as a cofactor.

It catalyses the reaction pyridoxamine 5'-phosphate + O2 + H2O = pyridoxal 5'-phosphate + H2O2 + NH4(+). It carries out the reaction pyridoxine 5'-phosphate + O2 = pyridoxal 5'-phosphate + H2O2. It functions in the pathway cofactor metabolism; pyridoxal 5'-phosphate salvage; pyridoxal 5'-phosphate from pyridoxamine 5'-phosphate: step 1/1. It participates in cofactor metabolism; pyridoxal 5'-phosphate salvage; pyridoxal 5'-phosphate from pyridoxine 5'-phosphate: step 1/1. Catalyzes the oxidation of either pyridoxine 5'-phosphate (PNP) or pyridoxamine 5'-phosphate (PMP) into pyridoxal 5'-phosphate (PLP). This Legionella pneumophila (strain Paris) protein is Pyridoxine/pyridoxamine 5'-phosphate oxidase.